The following is a 352-amino-acid chain: fMet-Leu-Phe receptor (352 aa).

Residues 1–27 are Extracellular-facing; the sequence is MDSNASLPLNVSGGTQATPAGLVVLDV. 2 N-linked (GlcNAc...) asparagine glycosylation sites follow: asparagine 4 and asparagine 10. Residues 28–50 traverse the membrane as a helical segment; sequence FSYLILVVTFVLGVLGNGLVIWV. The Cytoplasmic segment spans residues 51-61; the sequence is TGFRMTHTVTT. The helical transmembrane segment at 62 to 83 threads the bilayer; sequence ISYLNLALADFSFTSTLPFFIV. Residues 84 to 100 lie on the Extracellular side of the membrane; the sequence is TKALGGHWPFGWFLCKF. The cysteines at positions 98 and 178 are disulfide-linked. The helical transmembrane segment at 101-121 threads the bilayer; sequence VFTIVDINLFGSVFLIALIAL. Over 122–140 the chain is Cytoplasmic; the sequence is DRCICVLHPVWAQNHRNVS. A helical transmembrane segment spans residues 141–162; it reads LAKKVIVGPWICALLLTLPVII. The Extracellular portion of the chain corresponds to 163–207; sequence RVTTLSHPRAPGKMACTFDWSPWTEDPAEKLKVAISMFMVRGIIR. A helical membrane pass occupies residues 208-228; that stretch reads FIIGFSTPMSIVAVCYGLIAT. The Cytoplasmic portion of the chain corresponds to 229–244; the sequence is KIHRQGLIKSSRPLRV. Residues 245–268 traverse the membrane as a helical segment; that stretch reads LSFVVASFLLCWSPYQIAALIATV. Residues 269–287 are Extracellular-facing; it reads RIRELLLGMGKDLRIVLDV. A helical transmembrane segment spans residues 288 to 307; the sequence is TSFVAFFNSCLNPMLYVFMG. At 308–352 the chain is on the cytoplasmic side; sequence QDFRERLIHSLPASLERALSEDSAQTSDTGTNSTSAPAEAELQAI.

It belongs to the G-protein coupled receptor 1 family. In terms of processing, phosphorylated; which is necessary for desensitization. As to expression, neutrophils.

It is found in the cell membrane. Functionally, high affinity receptor for N-formyl-methionyl peptides (fMLP), which are powerful neutrophil chemotactic factors. Binding of fMLP to the receptor stimulates intracellular calcium mobilization and superoxide anion release. This response is mediated via a G-protein that activates a phosphatidylinositol-calcium second messenger system. Receptor for TAFA4, mediates its effects on chemoattracting macrophages, promoting phagocytosis and increasing ROS release. Receptor for cathepsin CTSG, leading to increased phagocyte chemotaxis. This is fMet-Leu-Phe receptor (FPR1) from Oryctolagus cuniculus (Rabbit).